A 98-amino-acid chain; its full sequence is uncharacterized protein (98 aa).

The signal sequence occupies residues 1–19 (MTERRRALSLAAVVDSINL). The tract at residues 40 to 98 (PPGGSFSGIKRESRRKRPSRNEIYGGGVLEQEVRMRRWSKTASPPVSLHHRPLGPARKP) is disordered. Positions 87–98 (LHHRPLGPARKP) are enriched in basic residues.

This is an uncharacterized protein from Homo sapiens (Human).